The chain runs to 514 residues: Polygalacturonase (514 aa).

The N-terminal stretch at 1 to 22 is a signal peptide; that stretch reads MAMKFIAPMAFVAMQLIIMAAA. Positions 23–45 are excised as a propeptide; that stretch reads EDQSAQIMLDSDIEQYLRSNRSL. PbH1 repeat units follow at residues 214 to 240, 241 to 262, 264 to 284, 294 to 315, and 323 to 344; these read CEGV…DIFA, SKNF…AIGT, SSNI…SIGS, VSYV…RIKT, and ASHI…LINQ. The active-site Proton donor is the aspartate 255. Residue histidine 278 is part of the active site. Positions 434-514 are excised as a propeptide; that stretch reads AKRKESKSHK…CSRHGKIYHP (81 aa). N-linked (GlcNAc...) asparagine glycosylation is found at asparagine 460 and asparagine 472.

It belongs to the glycosyl hydrolase 28 family.

Its subcellular location is the secreted. It is found in the plastid. It localises to the amyloplast. The protein resides in the cell wall. The enzyme catalyses (1,4-alpha-D-galacturonosyl)n+m + H2O = (1,4-alpha-D-galacturonosyl)n + (1,4-alpha-D-galacturonosyl)m.. The polypeptide is Polygalacturonase (Cryptomeria japonica (Japanese cedar)).